The following is a 215-amino-acid chain: Eukaryotic translation initiation factor 4E-1 (215 aa).

The tract at residues M1–G35 is disordered. The segment covering E16–D27 has biased composition (acidic residues). EIF4G-binding regions lie at residues H40–E43 and F50–H86. MRNA contacts are provided by residues R58–G63, K90, and W108–E109. An intrachain disulfide couples C113 to C151. Residues H134–Q143 are EIF4G-binding. MRNA-binding positions include R158 to R163 and K203 to K207.

It belongs to the eukaryotic initiation factor 4E family. EIF4F is a multi-subunit complex, the composition of which varies with external and internal environmental conditions. It is composed of at least EIF4A, EIF4E and EIF4G. EIF4E is also known to interact with other partners. In higher plants two isoforms of EIF4F have been identified, named isoform EIF4F and isoform EIF(iso)4F. Isoform EIF4F has subunits p220 and p26, whereas isoform EIF(iso)4F has subunits p82 and p28. In terms of assembly, (Microbial infection) Interacts with potyvirus viral genome-linked protein (VPg); this interaction is possible in susceptible hosts but impaired in resistant plants. According to the redox status, the Cys-113-Cys-151 disulfide bridge may have a role in regulating protein function by affecting its ability to bind capped mRNA.

It is found in the nucleus. Its subcellular location is the cytoplasm. Component of the protein complex eIF4F, which is involved in the recognition of the mRNA cap, ATP-dependent unwinding of 5'-terminal secondary structure and recruitment of mRNA to the ribosome. Recognizes and binds the 7-methylguanosine-containing mRNA cap during an early step in the initiation of protein synthesis and facilitates ribosome binding by inducing the unwinding of the mRNAs secondary structures. Key component of recessive resistance to potyviruses and bymoviruses, including barley yellow mosaic virus and barley mild mosaic virus. Functionally, (Microbial infection) Susceptibility host factor required for viral infection by recruiting viral RNAs to the host ribosomal complex via an interaction with viral genome-linked protein (VPg). The polypeptide is Eukaryotic translation initiation factor 4E-1 (Hordeum vulgare subsp. vulgare (Domesticated barley)).